A 156-amino-acid chain; its full sequence is Cyclin-dependent protein kinase inhibitor SMR10 (156 aa).

The tract at residues 52-90 is disordered; sequence QDQDLEPKSQETNNCSRKEGATVKKEEEEEDDYCKTPTR. The span at 67-77 shows a compositional bias: basic and acidic residues; it reads SRKEGATVKKE.

Its function is as follows. Probable cyclin-dependent protein kinase (CDK) inhibitor that functions as a repressor of mitosis in the endoreduplication cell cycle. The sequence is that of Cyclin-dependent protein kinase inhibitor SMR10 from Arabidopsis thaliana (Mouse-ear cress).